Here is a 385-residue protein sequence, read N- to C-terminus: Meiotic recombination protein SPO11-2 (385 aa).

The Topo IIA-type catalytic domain maps to 24 to 169 (LPPAEVRARI…LGIMASSRGA (146 aa)). The active-site O-(5'-phospho-DNA)-tyrosine intermediate is tyrosine 126. The Mg(2+) site is built by glutamate 219 and aspartate 272.

The protein belongs to the TOP6A family. Interacts with TOP6B. Mg(2+) serves as cofactor. As to expression, highly expressed in flowers before pollination. Expressed in roots and shoots.

It is found in the nucleus. It catalyses the reaction ATP-dependent breakage, passage and rejoining of double-stranded DNA.. Functionally, required for meiotic recombination. Mediates DNA cleavage that forms the double-strand breaks (DSB) that initiate meiotic recombination. The sequence is that of Meiotic recombination protein SPO11-2 (SPO11-2) from Oryza sativa subsp. indica (Rice).